We begin with the raw amino-acid sequence, 397 residues long: Nuclear pore complex-interacting protein family member B2 (397 aa).

Residues 256-397 (NRMGHQPPPP…KLRTGHCTQA (142 aa)) form a disordered region. Polar residues predominate over residues 267 to 277 (QQHSITDNSLS). Positions 278-287 (LKTPPECLLT) are enriched in low complexity. Residues 382–391 (KRRRLSKLRT) are compositionally biased toward basic residues.

It belongs to the NPIP family.

The protein localises to the nucleus. The sequence is that of Nuclear pore complex-interacting protein family member B2 from Homo sapiens (Human).